Consider the following 230-residue polypeptide: Thioredoxin domain-containing protein PLP3A (230 aa).

The Thioredoxin domain occupies 89–173 (VSEGDFLGEV…GVAMDRLVGF (85 aa)). Residues 197–230 (LSKKKKEEDDEDAEYQESIRRSVRSSENLDSDSD) form a disordered region.

The protein belongs to the phosducin family. Interacts with TUBB2, TUBB3, TUBB4 and TUBB5. Expressed in embryos, shoot meristems, leaf primordia, root meristems, floral meristems and young floral buds.

It is found in the cytoplasm. Its subcellular location is the nucleus. Tubulin-binding protein involved in microtubule formation. This Arabidopsis thaliana (Mouse-ear cress) protein is Thioredoxin domain-containing protein PLP3A (PLP3A).